The chain runs to 377 residues: GTP 3',8-cyclase (377 aa).

Positions 1 to 29 (MTTRLYLSPTPPRNDREGASKSTSASIKH) are disordered. In terms of domain architecture, Radical SAM core spans 45–271 (RFGRIARDLR…FTLSPAKEPR (227 aa)). Arginine 54 contributes to the GTP binding site. 2 residues coordinate [4Fe-4S] cluster: cysteine 61 and cysteine 65. Residue tyrosine 67 coordinates S-adenosyl-L-methionine. Cysteine 68 lines the [4Fe-4S] cluster pocket. Position 105 (arginine 105) interacts with GTP. Glycine 109 provides a ligand contact to S-adenosyl-L-methionine. Threonine 140 lines the GTP pocket. Serine 164 is a binding site for S-adenosyl-L-methionine. Lysine 201 is a binding site for GTP. Methionine 235 lines the S-adenosyl-L-methionine pocket. [4Fe-4S] cluster contacts are provided by cysteine 304 and cysteine 307. 309–311 (RSR) is a binding site for GTP. A [4Fe-4S] cluster-binding site is contributed by cysteine 321.

It belongs to the radical SAM superfamily. MoaA family. As to quaternary structure, monomer and homodimer. It depends on [4Fe-4S] cluster as a cofactor.

The enzyme catalyses GTP + AH2 + S-adenosyl-L-methionine = (8S)-3',8-cyclo-7,8-dihydroguanosine 5'-triphosphate + 5'-deoxyadenosine + L-methionine + A + H(+). It participates in cofactor biosynthesis; molybdopterin biosynthesis. Its function is as follows. Catalyzes the cyclization of GTP to (8S)-3',8-cyclo-7,8-dihydroguanosine 5'-triphosphate. This is GTP 3',8-cyclase from Corynebacterium glutamicum (strain R).